The following is a 172-amino-acid chain: Endoribonuclease YbeY (172 aa).

Histidine 134, histidine 138, and histidine 144 together coordinate Zn(2+).

This sequence belongs to the endoribonuclease YbeY family. The cofactor is Zn(2+).

It is found in the cytoplasm. Its function is as follows. Single strand-specific metallo-endoribonuclease involved in late-stage 70S ribosome quality control and in maturation of the 3' terminus of the 16S rRNA. This chain is Endoribonuclease YbeY, found in Burkholderia cenocepacia (strain HI2424).